Consider the following 194-residue polypeptide: Transcriptional repressor NrdR (194 aa).

The segment at 3-33 (CPFCGHADDRVLDTRVQKDGSIRRRRECLEC) is a zinc-finger region. The region spanning 48–138 (PFIIKKDGRR…VYRTFKDVQE (91 aa)) is the ATP-cone domain. A compositionally biased stretch (basic and acidic residues) spans 168–179 (ESEKSTNHETDS). The segment at 168–194 (ESEKSTNHETDSKTPSPRTRPPGPLSN) is disordered. The span at 185–194 (RTRPPGPLSN) shows a compositional bias: pro residues.

Belongs to the NrdR family. The cofactor is Zn(2+).

Its function is as follows. Negatively regulates transcription of bacterial ribonucleotide reductase nrd genes and operons by binding to NrdR-boxes. In Bdellovibrio bacteriovorus (strain ATCC 15356 / DSM 50701 / NCIMB 9529 / HD100), this protein is Transcriptional repressor NrdR.